Reading from the N-terminus, the 448-residue chain is SVP1-like protein 2 (448 aa).

N-linked (GlcNAc...) asparagine glycans are attached at residues N61, N155, N256, N280, N315, and N421. 2 WD repeats span residues 222–262 (AHKN…LIKE) and 267–306 (VDKA…NTET). The interval 416 to 435 (THYSLNESLRNEDTKSAGEP) is disordered. Basic and acidic residues predominate over residues 424–435 (LRNEDTKSAGEP).

This sequence belongs to the WD repeat PROPPIN family. Post-translationally, N-glycosylated.

The protein resides in the endosome membrane. The protein localises to the prevacuolar compartment membrane. Involved in piecemeal microautophagy of the nucleus (micronucleophagy). The polypeptide is SVP1-like protein 2 (HSV2) (Saccharomyces cerevisiae (strain ATCC 204508 / S288c) (Baker's yeast)).